The following is a 508-amino-acid chain: 2,3-bisphosphoglycerate-independent phosphoglycerate mutase (508 aa).

Mn(2+) is bound by residues aspartate 11 and serine 61. Serine 61 (phosphoserine intermediate) is an active-site residue. Substrate contacts are provided by residues histidine 122, 150-151, arginine 182, arginine 188, 257-260, and lysine 332; these read RD and RPDR. Aspartate 397, histidine 401, aspartate 438, histidine 439, and histidine 456 together coordinate Mn(2+).

Belongs to the BPG-independent phosphoglycerate mutase family. Monomer. Mn(2+) is required as a cofactor.

It catalyses the reaction (2R)-2-phosphoglycerate = (2R)-3-phosphoglycerate. It participates in carbohydrate degradation; glycolysis; pyruvate from D-glyceraldehyde 3-phosphate: step 3/5. In terms of biological role, catalyzes the interconversion of 2-phosphoglycerate and 3-phosphoglycerate. This Mycoplasma pneumoniae (strain ATCC 29342 / M129 / Subtype 1) (Mycoplasmoides pneumoniae) protein is 2,3-bisphosphoglycerate-independent phosphoglycerate mutase.